Here is a 522-residue protein sequence, read N- to C-terminus: Semenogelin-2 (522 aa).

Residues 1–23 (MKSIILFVLSLLLILEKQAAVMG) form the signal peptide. 4 disordered regions span residues 26 to 62 (CGSK…SKGS), 132 to 158 (GGQA…ISSQ), 272 to 358 (NLNQ…ERHL), and 379 to 522 (EEQI…PVST). 2 stretches are compositionally biased toward polar residues: residues 31–40 (QLPSGSSQFP) and 137–158 (RGTQ…ISSQ). Residues 292–310 (RTEERQLNRGEKSVQKDVS) are compositionally biased toward basic and acidic residues. Positions 325–335 (KSQNQVTIHSQ) are enriched in polar residues. Residues 336–345 (GQEHGHKENK) show a composition bias toward basic and acidic residues. Composition is skewed to polar residues over residues 379-397 (EEQI…SQAQ), 427-436 (KDVSQSSTSF), and 446-464 (SQIQ…QNAK). Composition is skewed to basic and acidic residues over residues 465–492 (GKSD…ESSE) and 499–522 (TEHE…PVST).

The protein belongs to the semenogelin family. As to quaternary structure, interacts with SERPINA5.

It is found in the secreted. In terms of biological role, participates in the formation of a gel matrix (sperm coagulum) entrapping the accessory gland secretions and ejaculated spermatozoa. The polypeptide is Semenogelin-2 (SEMG2) (Hylobates klossii (Kloss's gibbon)).